A 142-amino-acid chain; its full sequence is MKTFVAKPETVKRDWYVVDATGKTLGRLGHELARRLRGKHKAEYTPHVDTGDYIVVINAEKVAVTGNKETDKLYYWHTGYVGGIKQATFKEMIARRPEAVIEIAVKGMLPKGPLGRAMFRKLKVYAGSEHNHAAQQPQVLDI.

The protein belongs to the universal ribosomal protein uL13 family. As to quaternary structure, part of the 50S ribosomal subunit.

Functionally, this protein is one of the early assembly proteins of the 50S ribosomal subunit, although it is not seen to bind rRNA by itself. It is important during the early stages of 50S assembly. In Histophilus somni (Haemophilus somnus), this protein is Large ribosomal subunit protein uL13.